We begin with the raw amino-acid sequence, 479 residues long: Aspartyl/glutamyl-tRNA(Asn/Gln) amidotransferase subunit B (479 aa).

This sequence belongs to the GatB/GatE family. GatB subfamily. In terms of assembly, heterotrimer of A, B and C subunits.

It catalyses the reaction L-glutamyl-tRNA(Gln) + L-glutamine + ATP + H2O = L-glutaminyl-tRNA(Gln) + L-glutamate + ADP + phosphate + H(+). It carries out the reaction L-aspartyl-tRNA(Asn) + L-glutamine + ATP + H2O = L-asparaginyl-tRNA(Asn) + L-glutamate + ADP + phosphate + 2 H(+). Its function is as follows. Allows the formation of correctly charged Asn-tRNA(Asn) or Gln-tRNA(Gln) through the transamidation of misacylated Asp-tRNA(Asn) or Glu-tRNA(Gln) in organisms which lack either or both of asparaginyl-tRNA or glutaminyl-tRNA synthetases. The reaction takes place in the presence of glutamine and ATP through an activated phospho-Asp-tRNA(Asn) or phospho-Glu-tRNA(Gln). This chain is Aspartyl/glutamyl-tRNA(Asn/Gln) amidotransferase subunit B, found in Streptococcus pyogenes serotype M6 (strain ATCC BAA-946 / MGAS10394).